We begin with the raw amino-acid sequence, 136 residues long: uncharacterized protein (136 aa).

A helical membrane pass occupies residues 40-62 (LFYSISLCVSLLLHISLCVSVYV).

It is found in the membrane. This is an uncharacterized protein from Homo sapiens (Human).